The primary structure comprises 569 residues: Phospholipase B-like protein D (569 aa).

Residues 1–22 (MIIFKNLLKLLIILLTIKLYFC) form the signal peptide. 5 N-linked (GlcNAc...) asparagine glycosylation sites follow: asparagine 93, asparagine 126, asparagine 181, asparagine 425, and asparagine 430.

It belongs to the phospholipase B-like family.

The protein localises to the secreted. In terms of biological role, probable phospholipase. The chain is Phospholipase B-like protein D (plbD) from Dictyostelium discoideum (Social amoeba).